The primary structure comprises 25 residues: Small ribosomal subunit protein uS19 (25 aa).

Positions Gly-1–Arg-25 are disordered.

This sequence belongs to the universal ribosomal protein uS19 family.

Its function is as follows. Protein S19 forms a complex with S13 that binds strongly to the 16S ribosomal RNA. This Acholeplasma laidlawii protein is Small ribosomal subunit protein uS19 (rpsS).